Here is a 330-residue protein sequence, read N- to C-terminus: Free fatty acid receptor 2 (330 aa).

The Extracellular portion of the chain corresponds to methionine 1–methionine 12. The chain crosses the membrane as a helical span at residues alanine 13–valine 33. Over glycine 34 to proline 41 the chain is Cytoplasmic. A helical transmembrane segment spans residues alanine 42 to leucine 62. Residues proline 63–leucine 84 are Extracellular-facing. Residues threonine 85 to isoleucine 105 form a helical membrane-spanning segment. Residues glutamate 106–glycine 126 lie on the Cytoplasmic side of the membrane. Residues valine 127–valine 147 traverse the membrane as a helical segment. Residues glutamine 148 to leucine 173 lie on the Extracellular side of the membrane. N-linked (GlcNAc...) asparagine glycans are attached at residues asparagine 151 and asparagine 167. A helical transmembrane segment spans residues aspartate 174–valine 194. Residues threonine 195–arginine 219 lie on the Cytoplasmic side of the membrane. The chain crosses the membrane as a helical span at residues alanine 220–valine 240. Over serine 241–arginine 255 the chain is Extracellular. A helical transmembrane segment spans residues serine 256–serine 276. Over serine 277–glutamate 330 the chain is Cytoplasmic. The segment at leucine 299 to glutamate 330 is disordered. Residues arginine 302–glycine 315 are compositionally biased toward basic and acidic residues.

The protein belongs to the G-protein coupled receptor 1 family. As to quaternary structure, interacts with FCN1 (via Fibrinogen C-terminal domain). In terms of tissue distribution, expressed at relatively high levels in peripheral blood leukocytes and, to lesser extent, in spleen.

The protein localises to the cell membrane. Its function is as follows. G protein-coupled receptor that is activated by a major product of dietary fiber digestion, the short chain fatty acids (SCFAs), and that plays a role in the regulation of whole-body energy homeostasis and in intestinal immunity. In omnivorous mammals, the short chain fatty acids acetate, propionate and butyrate are produced primarily by the gut microbiome that metabolizes dietary fibers. SCFAs serve as a source of energy but also act as signaling molecules. That G protein-coupled receptor is probably coupled to the pertussis toxin-sensitive, G(i/o)-alpha family of G proteins but also to the Gq family. Its activation results in the formation of inositol 1,4,5-trisphosphate, the mobilization of intracellular calcium, the phosphorylation of the MAPK3/ERK1 and MAPK1/ERK2 kinases and the inhibition of intracellular cAMP accumulation. May play a role in glucose homeostasis by regulating the secretion of GLP-1, in response to short-chain fatty acids accumulating in the intestine. May also regulate the production of LEP/Leptin, a hormone acting on the central nervous system to inhibit food intake. Finally, may also regulate whole-body energy homeostasis through adipogenesis regulating both differentiation and lipid storage of adipocytes. In parallel to its role in energy homeostasis, may also mediate the activation of the inflammatory and immune responses by SCFA in the intestine, regulating the rapid production of chemokines and cytokines. May also play a role in the resolution of the inflammatory response and control chemotaxis in neutrophils. In addition to SCFAs, may also be activated by the extracellular lectin FCN1 in a process leading to activation of monocytes and inducing the secretion of interleukin-8/IL-8 in response to the presence of microbes. Among SCFAs, the fatty acids containing less than 6 carbons, the most potent activators are probably acetate, propionate and butyrate. Exhibits a SCFA-independent constitutive G protein-coupled receptor activity. In Homo sapiens (Human), this protein is Free fatty acid receptor 2 (FFAR2).